An 84-amino-acid chain; its full sequence is Small ribosomal subunit protein bS18 (84 aa).

This sequence belongs to the bacterial ribosomal protein bS18 family. Part of the 30S ribosomal subunit. Forms a tight heterodimer with protein bS6.

Its function is as follows. Binds as a heterodimer with protein bS6 to the central domain of the 16S rRNA, where it helps stabilize the platform of the 30S subunit. The protein is Small ribosomal subunit protein bS18 of Mycobacterium sp. (strain JLS).